A 300-amino-acid chain; its full sequence is NAD kinase (300 aa).

Asp-78 acts as the Proton acceptor in catalysis. Residues 78-79 (DG), 152-153 (ND), His-163, Arg-180, Asp-182, and 193-198 (TAYALS) contribute to the NAD(+) site.

It belongs to the NAD kinase family. It depends on a divalent metal cation as a cofactor.

Its subcellular location is the cytoplasm. It carries out the reaction NAD(+) + ATP = ADP + NADP(+) + H(+). Functionally, involved in the regulation of the intracellular balance of NAD and NADP, and is a key enzyme in the biosynthesis of NADP. Catalyzes specifically the phosphorylation on 2'-hydroxyl of the adenosine moiety of NAD to yield NADP. This chain is NAD kinase, found in Alcanivorax borkumensis (strain ATCC 700651 / DSM 11573 / NCIMB 13689 / SK2).